A 172-amino-acid polypeptide reads, in one-letter code: Small ribosomal subunit protein uS5 (172 aa).

Residues 16–79 (LKDRLVAINR…EAAKKNLIRV (64 aa)) enclose the S5 DRBM domain.

Belongs to the universal ribosomal protein uS5 family. In terms of assembly, part of the 30S ribosomal subunit. Contacts proteins S4 and S8.

In terms of biological role, with S4 and S12 plays an important role in translational accuracy. Its function is as follows. Located at the back of the 30S subunit body where it stabilizes the conformation of the head with respect to the body. This is Small ribosomal subunit protein uS5 from Porphyromonas gingivalis (strain ATCC BAA-308 / W83).